The sequence spans 102 residues: Glutaredoxin-C13 (102 aa).

The Glutaredoxin domain maps to 1 to 101 (MDKVMRMSSE…PLIKPYQSIL (101 aa)). A disulfide bridge connects residues Cys21 and Cys24.

This sequence belongs to the glutaredoxin family. CC-type subfamily.

The protein localises to the cytoplasm. Has a glutathione-disulfide oxidoreductase activity in the presence of NADPH and glutathione reductase. Reduces low molecular weight disulfides and proteins. The polypeptide is Glutaredoxin-C13 (GRXC13) (Arabidopsis thaliana (Mouse-ear cress)).